Consider the following 35-residue polypeptide: Photosystem II reaction center protein T (35 aa).

A helical membrane pass occupies residues 3-23 (ALVYTFLLVGTLGIIFFAIFF).

This sequence belongs to the PsbT family. As to quaternary structure, PSII is composed of 1 copy each of membrane proteins PsbA, PsbB, PsbC, PsbD, PsbE, PsbF, PsbH, PsbI, PsbJ, PsbK, PsbL, PsbM, PsbT, PsbY, PsbZ, Psb30/Ycf12, at least 3 peripheral proteins of the oxygen-evolving complex and a large number of cofactors. It forms dimeric complexes.

The protein resides in the plastid. Its subcellular location is the chloroplast thylakoid membrane. Its function is as follows. Found at the monomer-monomer interface of the photosystem II (PS II) dimer, plays a role in assembly and dimerization of PSII. PSII is a light-driven water plastoquinone oxidoreductase, using light energy to abstract electrons from H(2)O, generating a proton gradient subsequently used for ATP formation. This Chaetosphaeridium globosum (Charophycean green alga) protein is Photosystem II reaction center protein T.